The primary structure comprises 126 residues: Profilin (126 aa).

The protein belongs to the profilin family. In terms of assembly, occurs in many kinds of cells as a complex with monomeric actin in a 1:1 ratio. Expressed in ovary and head.

It localises to the cytoplasm. The protein localises to the cytoskeleton. Functionally, binds to actin and affects the structure of the cytoskeleton. At high concentrations, profilin prevents the polymerization of actin, whereas it enhances it at low concentrations. By binding to PIP2, it may inhibit the formation of IP3 and DG. This profilin is required for intercellular cytoplasm transport during Drosophila oogenesis. Function in neurons is essential for adult survival, and is important for climbing behavior and activity. The chain is Profilin (chic) from Drosophila melanogaster (Fruit fly).